The primary structure comprises 942 residues: ATP-dependent RNA helicase DDX42 (942 aa).

Residues Met1–Gly18 are compositionally biased toward gly residues. The segment at Met1–Asp114 is disordered. Lys5 is modified (N6-acetyllysine). Arg12 bears the Omega-N-methylarginine mark. Residues Ser35–Ala52 are compositionally biased toward low complexity. The residue at position 58 (Ser58) is a Phosphoserine. The span at Asp70–Ser84 shows a compositional bias: acidic residues. Residues Ser96, Ser104, Ser109, and Ser111 each carry the phosphoserine modification. Residues Leu116 to Gln157 adopt a coiled-coil conformation. The tract at residues Glu182–Ile203 is disordered. A Phosphoserine modification is found at Ser185. A Q motif motif is present at residues Ser253–Cys281. The region spanning Val284–Val459 is the Helicase ATP-binding domain. ATP is bound at residue Ala297–Thr304. The DEAD box motif lies at Asp407–Asp410. Residues Trp487–Ala632 form the Helicase C-terminal domain. Polar residues-rich tracts occupy residues Leu737 to Thr760 and Gly786 to Glu798. 2 disordered regions span residues Leu737–Gly762 and Gly783–Ser942. The interval Asn738–Arg833 is necessary for interaction with TP53BP2. Position 754 is a phosphoserine (Ser754). The segment covering Ser820–Ala924 has biased composition (basic and acidic residues). Lys899 is covalently cross-linked (Glycyl lysine isopeptide (Lys-Gly) (interchain with G-Cter in SUMO2)).

This sequence belongs to the DEAD box helicase family. DDX42 subfamily. As to quaternary structure, transient component of the SF3B subcomplex of the 17S U2 SnRNP complex. Interacts (via the C-terminus) with TP53BP2; the interaction is not inhibitied by TP53BP2 ubiquitination and is independent of p53/TP53.

It localises to the cytoplasm. It is found in the nucleus. It carries out the reaction ATP + H2O = ADP + phosphate + H(+). In terms of biological role, ATP-dependent RNA helicase that binds to partially double-stranded RNAs (dsRNAs) in order to unwind RNA secondary structures. Unwinding is promoted in the presence of single-strand binding proteins. Also mediates RNA duplex formation thereby displacing the single-strand RNA binding protein. ATP and ADP modulate its activity: ATP binding and hydrolysis by DDX42 triggers RNA strand separation, whereas the ADP-bound form of the protein triggers annealing of complementary RNA strands. Required for assembly of the 17S U2 SnRNP complex of the spliceosome, a large ribonucleoprotein complex that removes introns from transcribed pre-mRNAs: DDX42 associates transiently with the SF3B subcomplex of the 17S U2 SnRNP complex and is released after fulfilling its role in the assembly of 17S U2 SnRNP. Involved in the survival of cells by interacting with TP53BP2 and thereby counteracting the apoptosis-stimulating activity of TP53BP2. Relocalizes TP53BP2 to the cytoplasm. The sequence is that of ATP-dependent RNA helicase DDX42 (DDX42) from Pongo abelii (Sumatran orangutan).